Here is a 269-residue protein sequence, read N- to C-terminus: Cytochrome c oxidase subunit 3 (269 aa).

A run of 7 helical transmembrane segments spans residues 21–41, 45–65, 90–110, 127–147, 167–187, 204–224, and 247–267; these read PWPI…GLTM, IVGN…MTMW, GFLL…WAYF, VGIT…ILLA, ALNG…CQYI, VFFA…IMLA, and ILYL…MYWW.

This sequence belongs to the cytochrome c oxidase subunit 3 family. Component of the cytochrome c oxidase (complex IV, CIV), a multisubunit enzyme composed of a catalytic core of 3 subunits and several supernumerary subunits. The complex exists as a monomer or a dimer and forms supercomplexes (SCs) in the inner mitochondrial membrane with ubiquinol-cytochrome c oxidoreductase (cytochrome b-c1 complex, complex III, CIII).

It is found in the mitochondrion inner membrane. It catalyses the reaction 4 Fe(II)-[cytochrome c] + O2 + 8 H(+)(in) = 4 Fe(III)-[cytochrome c] + 2 H2O + 4 H(+)(out). Functionally, component of the cytochrome c oxidase, the last enzyme in the mitochondrial electron transport chain which drives oxidative phosphorylation. The respiratory chain contains 3 multisubunit complexes succinate dehydrogenase (complex II, CII), ubiquinol-cytochrome c oxidoreductase (cytochrome b-c1 complex, complex III, CIII) and cytochrome c oxidase (complex IV, CIV), that cooperate to transfer electrons derived from NADH and succinate to molecular oxygen, creating an electrochemical gradient over the inner membrane that drives transmembrane transport and the ATP synthase. Cytochrome c oxidase is the component of the respiratory chain that catalyzes the reduction of oxygen to water. Electrons originating from reduced cytochrome c in the intermembrane space (IMS) are transferred via the dinuclear copper A center (CU(A)) of subunit 2 and heme A of subunit 1 to the active site in subunit 1, a binuclear center (BNC) formed by heme A3 and copper B (CU(B)). The BNC reduces molecular oxygen to 2 water molecules using 4 electrons from cytochrome c in the IMS and 4 protons from the mitochondrial matrix. The polypeptide is Cytochrome c oxidase subunit 3 (COX3) (Wickerhamomyces canadensis (Yeast)).